A 335-amino-acid polypeptide reads, in one-letter code: RNA 3'-terminal phosphate cyclase (335 aa).

ATP is bound by residues glutamine 101 and 282–285 (HMGD). Residue histidine 306 is the Tele-AMP-histidine intermediate of the active site.

The protein belongs to the RNA 3'-terminal cyclase family. Type 1 subfamily.

The protein localises to the cytoplasm. The enzyme catalyses a 3'-end 3'-phospho-ribonucleotide-RNA + ATP = a 3'-end 2',3'-cyclophospho-ribonucleotide-RNA + AMP + diphosphate. Functionally, catalyzes the conversion of 3'-phosphate to a 2',3'-cyclic phosphodiester at the end of RNA. The mechanism of action of the enzyme occurs in 3 steps: (A) adenylation of the enzyme by ATP; (B) transfer of adenylate to an RNA-N3'P to produce RNA-N3'PP5'A; (C) and attack of the adjacent 2'-hydroxyl on the 3'-phosphorus in the diester linkage to produce the cyclic end product. The biological role of this enzyme is unknown but it is likely to function in some aspects of cellular RNA processing. The sequence is that of RNA 3'-terminal phosphate cyclase from Sulfolobus acidocaldarius (strain ATCC 33909 / DSM 639 / JCM 8929 / NBRC 15157 / NCIMB 11770).